A 572-amino-acid chain; its full sequence is Phenylalanine--tRNA ligase beta subunit (572 aa).

Residues 285–363 (LSTTTKTVSH…RAFGFNELEP (79 aa)) form the B5 domain. Mg(2+)-binding residues include Asp-341, Asp-347, Asp-350, and Asp-351.

This sequence belongs to the phenylalanyl-tRNA synthetase beta subunit family. Type 2 subfamily. As to quaternary structure, tetramer of two alpha and two beta subunits. It depends on Mg(2+) as a cofactor.

It localises to the cytoplasm. It carries out the reaction tRNA(Phe) + L-phenylalanine + ATP = L-phenylalanyl-tRNA(Phe) + AMP + diphosphate + H(+). The chain is Phenylalanine--tRNA ligase beta subunit from Natronomonas pharaonis (strain ATCC 35678 / DSM 2160 / CIP 103997 / JCM 8858 / NBRC 14720 / NCIMB 2260 / Gabara) (Halobacterium pharaonis).